The following is a 383-amino-acid chain: tRNA (adenine(58)-N(1))-methyltransferase catalytic subunit TRM61 (383 aa).

S-adenosyl-L-methionine-binding positions include Val-94, 121–124 (SGSF), Glu-139, Arg-144, 168–169 (DV), and Asp-203. Ser-302 carries the phosphoserine modification.

This sequence belongs to the class I-like SAM-binding methyltransferase superfamily. TRM61 family. In terms of assembly, heterotetramer; composed of two copies of TRM6/GCD10 and two copies of TRM61/GCD14.

It is found in the nucleus. It catalyses the reaction adenosine(58) in tRNA + S-adenosyl-L-methionine = N(1)-methyladenosine(58) in tRNA + S-adenosyl-L-homocysteine + H(+). In terms of biological role, catalytic subunit of tRNA (adenine-N(1)-)-methyltransferase, which catalyzes the formation of N(1)-methyladenine at position 58 (m1A58) in initiator methionyl-tRNA. GCD14 is also required for repression of GCN4 mRNA translation by the upstream open reading frames (uORFs) under conditions of amino acid sufficiency. This is tRNA (adenine(58)-N(1))-methyltransferase catalytic subunit TRM61 (GCD14) from Saccharomyces cerevisiae (strain ATCC 204508 / S288c) (Baker's yeast).